The following is a 391-amino-acid chain: DNA polymerase IV (391 aa).

The region spanning 6–187 is the UmuC domain; it reads IIHVDMDAFF…LPVEMLWGVG (182 aa). Mg(2+)-binding residues include D10 and D105. E106 is an active-site residue.

It belongs to the DNA polymerase type-Y family. In terms of assembly, monomer. It depends on Mg(2+) as a cofactor.

It localises to the cytoplasm. It catalyses the reaction DNA(n) + a 2'-deoxyribonucleoside 5'-triphosphate = DNA(n+1) + diphosphate. In terms of biological role, poorly processive, error-prone DNA polymerase involved in untargeted mutagenesis. Copies undamaged DNA at stalled replication forks, which arise in vivo from mismatched or misaligned primer ends. These misaligned primers can be extended by PolIV. Exhibits no 3'-5' exonuclease (proofreading) activity. May be involved in translesional synthesis, in conjunction with the beta clamp from PolIII. This chain is DNA polymerase IV, found in Carboxydothermus hydrogenoformans (strain ATCC BAA-161 / DSM 6008 / Z-2901).